The primary structure comprises 262 residues: Abhydrolase domain-containing protein AKT2 (262 aa).

Residues 260–262 (SKL) carry the Peroxisomal targeting signal type 1 motif.

This sequence belongs to the AB hydrolase superfamily. AKT2 hydrolase family.

Its subcellular location is the peroxisome. Its pathway is mycotoxin biosynthesis. In terms of biological role, abhydrolase domain-containing protein; part of the gene clusters that mediate the biosynthesis of the host-selective toxins (HSTs) AK-toxins responsible for Japanese pear black spot disease by the Japanese pear pathotype. AK-toxins are esters of 9,10-epoxy 8-hydroxy 9-methyldecatrienoic acid (EDA). On cellular level, AK-toxins affect plasma membrane of susceptible cells and cause a sudden increase in loss of K(+) after a few minutes of toxin treatment. The acyl-CoA ligase AKT1, the hydrolase AKT2 and enoyl-CoA hydratase AKT3 are all involved in the biosynthesis of the AK-, AF- and ACT-toxin common 9,10-epoxy-8-hydroxy-9-methyl-decatrienoic acid (EDA) structural moiety. Part of the EDA biosynthesis occurs in the peroxisome since these 3 enzymes are localized in peroxisomes. The exact roles of the 3 enzymes, as well as of additional AK-toxin clusters enzymes, including AKT4, AKT6 and AKTS1, have still to be elucidated. The Cytochrome P450 monooxygenase AKT7 on the other side functions to limit production of EDA and AK-toxin, probably via the catalysis of a side reaction of EDA or its precursor. The protein is Abhydrolase domain-containing protein AKT2 of Alternaria alternata (Alternaria rot fungus).